The sequence spans 185 residues: Ribosome-recycling factor (185 aa).

Residues 143-163 form a disordered region; sequence EKEKLISEDDNKKGMDDIQKE.

This sequence belongs to the RRF family.

It is found in the cytoplasm. Functionally, responsible for the release of ribosomes from messenger RNA at the termination of protein biosynthesis. May increase the efficiency of translation by recycling ribosomes from one round of translation to another. The protein is Ribosome-recycling factor of Syntrophomonas wolfei subsp. wolfei (strain DSM 2245B / Goettingen).